Consider the following 565-residue polypeptide: MKSPAPSRPQKMALIPACIFLCFAALSVQAEETPVTPQPPDILLGPLFNDVQNAKLFPDQKTFADAVPNSDPLMILADYRMQQNQSGFDLRHFVNVNFTLPKEGEKYVPPEGQSLREHIDGLWPVLTRSTENTEKWDSLLPLPEPYVVPGGRFREVYYWDSYFTMLGLAESGHWDKVADMVANFAHEIDTYGHIPNGNRSYYLSRSQPPFFALMVELLAQHEGDAALKQYLPQMQKEYAYWMDGVENLQAGQQEKRVVKLQDGTLLNRYWDDRDTPRPESWVEDIATAKSNPNRPATEIYRDLRSAAASGWDFSSRWMDNPQQLNTLRTTSIVPVDLNSLMFKMEKILARASKAAGDNAMANQYETLANARQKGIEKYLWNDQQGWYADYDLKSHKVRNQLTAAALFPLYVNAAAKDRANKMATATKTHLLQPGGLNTTSVKSGQQWDAPNGWAPLQWVATEGLQNYGQKEVAMDISWHFLTNVQHTYDREKKLVEKYDVSTTGTGGGGGEYPLQDGFGWTNGVTLKMLDLICPKEQPCDNVPATRPTVKSATTQPSTKEAQPTP.

The N-terminal stretch at 1–30 (MKSPAPSRPQKMALIPACIFLCFAALSVQA) is a signal peptide. Substrate contacts are provided by residues Arg-152, 159 to 160 (WD), Asn-196, 205 to 207 (RSQ), 277 to 279 (RPE), and Gly-310. Catalysis depends on proton donor/acceptor residues Asp-312 and Glu-496. Substrate is bound at residue Glu-511. The segment at 538–565 (PCDNVPATRPTVKSATTQPSTKEAQPTP) is disordered. The span at 548–565 (TVKSATTQPSTKEAQPTP) shows a compositional bias: polar residues.

This sequence belongs to the glycosyl hydrolase 37 family. Monomer.

The protein resides in the periplasm. The catalysed reaction is alpha,alpha-trehalose + H2O = alpha-D-glucose + beta-D-glucose. Its function is as follows. Provides the cells with the ability to utilize trehalose at high osmolarity by splitting it into glucose molecules that can subsequently be taken up by the phosphotransferase-mediated uptake system. This is Periplasmic trehalase from Escherichia coli (strain K12 / MC4100 / BW2952).